We begin with the raw amino-acid sequence, 212 residues long: Large ribosomal subunit protein uL3 (212 aa).

Positions 119-146 are disordered; sequence YQGNIKRWGQSRGPETHGSRYHRIPGSM.

The protein belongs to the universal ribosomal protein uL3 family. In terms of assembly, part of the 50S ribosomal subunit. Forms a cluster with proteins L14 and L19.

Its function is as follows. One of the primary rRNA binding proteins, it binds directly near the 3'-end of the 23S rRNA, where it nucleates assembly of the 50S subunit. The protein is Large ribosomal subunit protein uL3 of Lactobacillus helveticus (strain DPC 4571).